The sequence spans 355 residues: Tyrosine recombinase XerC (355 aa).

A Core-binding (CB) domain is found at 4-89 (TQFDGDIDSF…AVRGFFAWAY (86 aa)). The tract at residues 138 to 180 (DDGGAAAASGSGKAAGKTADKSADTVNRSEAPARADKRDNARV) is disordered. The segment covering 141-154 (GAAAASGSGKAAGK) has biased composition (low complexity). Positions 158-349 (KSADTVNRSE…SIEQLKNRYG (192 aa)) constitute a Tyr recombinase domain. Residues 168 to 178 (APARADKRDNA) are compositionally biased toward basic and acidic residues. Active-site residues include R200, K224, H301, R304, and H327. Residue Y336 is the O-(3'-phospho-DNA)-tyrosine intermediate of the active site.

Belongs to the 'phage' integrase family. XerC subfamily. As to quaternary structure, forms a cyclic heterotetrameric complex composed of two molecules of XerC and two molecules of XerD.

Its subcellular location is the cytoplasm. Its function is as follows. Site-specific tyrosine recombinase, which acts by catalyzing the cutting and rejoining of the recombining DNA molecules. The XerC-XerD complex is essential to convert dimers of the bacterial chromosome into monomers to permit their segregation at cell division. It also contributes to the segregational stability of plasmids. The polypeptide is Tyrosine recombinase XerC (Bifidobacterium longum subsp. infantis (strain ATCC 15697 / DSM 20088 / JCM 1222 / NCTC 11817 / S12)).